Here is a 613-residue protein sequence, read N- to C-terminus: Metacaspase-1 (613 aa).

Active-site residues include His-404 and Cys-460.

The protein belongs to the peptidase C14B family. Monomer.

Activated by Ca(2+). Functionally, cysteine protease that cleaves specifically after arginine or lysine residues. May play a role in apoptosis. This chain is Metacaspase-1, found in Plasmodium falciparum (isolate 3D7).